We begin with the raw amino-acid sequence, 226 residues long: Survival motor neuron protein (226 aa).

Residues 35–44 (ADSTNKREEE) show a composition bias toward basic and acidic residues. The disordered stretch occupies residues 35–68 (ADSTNKREEENAAAAEEEAGEISATGGATSPEPV). Residues 69-128 (SFKVGDYARATYVDGVDYEGAVVSINEEKGTCVLRYLGYENEQEVLLVDLLPSWGKRVRR) enclose the Tudor domain. The interval 137–172 (DEDEQLSRPKASAGSHSKTPKSSRRSRISGGLVMPP) is disordered. The span at 154-163 (KTPKSSRRSR) shows a compositional bias: basic residues. The required for homodimerization stretch occupies residues 159–226 (SRRSRISGGL…TSGKKKTPKK (68 aa)).

This sequence belongs to the SMN family. In terms of assembly, homodimer (via C-terminal region). Component of the core survival motor neuron (SMN) complex composed of Smn, Gem2, Gem3, rig/Gem5 and one of 3 almost identical Gem4 paralogs encoded by Glos/Gem4a, Gem4b or Gem4c. Interacts with Gem3 (via C-terminus); the interaction is direct and stabilizes Smn. Part of a minimal SMN complex composed of Smn and Gem2 only; this complex is active in UsnRNP assembly. The SMN complex associates with the entire set of spliceosomal snRNP Sm proteins, SmB, SmD1, SmD2, SmD3, SmE, SmF and SmG, and with the snRNP-specific proteins snRNP-U1-70K, U2A, snf/U1A and U5-116KD. Interacts with Glos/Gem4a; the interaction is probably indirect. Interacts with Sbat and Vlet; Sbat and Vlet, along with Hez, may form an accessory subcomplex involved in SMN complex function. Interacts weakly with Gem3. Interacts with SmB and SmD1; the interaction is favored by methylation of the Sm proteins. Interacts with Actn; the interaction occurs in thoracic tissues and in adult flies. Interacts with Rpp20. Interacts with msk and Snup; these interactions are RNA-dependent. In late first instar larvae, expressed in pNBs. Expression increases as the pNBs enlarge, with the highest accumulation observed in dividing pNBs of second and third instar larvae. Enriched in type ID (thoracic and brain lobe), type IA and all the mira-expressing NBs of the brain lobes. In larvae, also expressed in muscle fibers. In larval and adult testis, expressed in germline stem cells and gonialblast, expression decreases as cells differentiate into cysts and spermatocytes. In adult fly thorax, expressed in the IFMs. In adult ovary, expressed in germline stem cells, cystoblasts, follicle cells, nurse cells and oocyte (at protein level). Also expressed in larval salivary glands.

It is found in the cytoplasm. It localises to the nucleus. The protein localises to the U-body. The protein resides in the gem. Its subcellular location is the cajal body. It is found in the myofibril. It localises to the sarcomere. The protein localises to the i band. The protein resides in the z line. Core component of the survival motor neuron (SMN) complex that plays an essential role in spliceosomal small nuclear ribonucleoprotein (snRNP) assembly in the cytoplasm, is required for pre-mRNA splicing in the nucleus and acts as a chaperone that discriminates target and non-target RNAs of Sm proteins. A major component of nuclear bodies known as gems (gemini of Cajal bodies) thought to be storage depots of excess SMN complexes. Required for normal expression of spliceosomal snRNAs and for U12 intron splicing. Required in cholinergic neurons, but not in motor neurons, to ensure correct splicing and proper levels of stas mRNA and normal neurotransmitter release by motor neurons. However, Smn is required in motor neurons, but not in cholinergic neurons, for normal motor behavior but plays no role in synaptic transmission according to a report. In both muscle and neurons, required for the formation of a normal neuromuscular junction (NMJ) structure. Plays a neuron-specific role in long-term homeostatic compensation at the larval NMJ. In the thorax of adult flies, required for Act88F, an indirect flight muscle (IFM)-specific actin, expression and for proper IFM myofibril formation. In nurse cells, oocytes and follicle cells, required to maintain normal organization of nuclear compartments including chromosomes, nucleoli, Cajal bodies, histone locus bodies and heterochromatin. Required for the functional integrity of the cytoplasmic U snRNP body (U body) and P body. Required in dividing postembryonic neuroblasts (pNBs) for the correct basal localization of mira. The tight regulation of its expression is critical for stem cell division, proliferation and differentiation in male germline and developing central nervous system (CNS). Required for tracheal terminal cell lumen formation. In Drosophila melanogaster (Fruit fly), this protein is Survival motor neuron protein.